The chain runs to 646 residues: MMNKWAKNWFGLSKKSVSTNSAKGSLPRSPLASIQTNQPVEEGEGGSLPSVSNLGPSSIDHPMEEFASDQSTVGNRNSNDILPEVDHEPSGYLKLQIGSLVLGGPHTDAALAMECSRLNQLFVVVQFGTTEFVSPPLKWESPGRDIGTSSRDSANVSRSSSMMSSHPIPTPAIQRTSSIPNPLTPSYVVFDVAKPVPIDVNIYDHGNNNEFVGRTYIHPSYNYGQFEQFCNSVEVSPAYNRMVDLRLSLNTVFQPLSQHSYGPDDFVPLKLIGKGTFGQVYLVRKKDTERVYAMKVLSKKVIVRRKEVAHTVGERDILVQTSAADSPFIVALRFSFQTPKDLYLVTDYMAGGELFWHLQKSVRFPEERAKFYIAELLLALQALHKRGIVYRDLKPENILLDVQGHIALCDFGLSKANLSVGTTTRTFCGTTDYLAPEVILDEAGYDMMVDFWSLGVLLYEMTCGWSPFYADNTQQLYKNIVFGKVRFPRGLLSVEARDLIKLLLNRNPKHRLGAHGDVEEVMKHPFFDGIDWKKLAAKEISPPFKPIVEGEIDVSNFDVEFTNKAIDRDFSSTDEMSTSAPLSSTVQNGFKGFTYIDASAMDEAFGYHNSNDSASSISSQDDYSKDNSDMDLNRANDEVFMGQIDP.

Disordered regions lie at residues 17–85 (VSTN…LPEV) and 143–176 (GRDIGTSSRDSANVSRSSSMMSSHPIPTPAIQRT). Positions 68–80 (SDQSTVGNRNSND) are enriched in polar residues. The span at 149–165 (SSRDSANVSRSSSMMSS) shows a compositional bias: low complexity. In terms of domain architecture, Protein kinase spans 266–527 (FVPLKLIGKG…VEEVMKHPFF (262 aa)). ATP contacts are provided by residues 272-280 (IGKGTFGQV) and lysine 295. Catalysis depends on aspartate 392, which acts as the Proton acceptor. One can recognise an AGC-kinase C-terminal domain in the interval 528–605 (DGIDWKKLAA…IDASAMDEAF (78 aa)). The tract at residues 609 to 646 (NSNDSASSISSQDDYSKDNSDMDLNRANDEVFMGQIDP) is disordered. Residues 610–621 (SNDSASSISSQD) are compositionally biased toward low complexity. Residues 622-637 (DYSKDNSDMDLNRAND) show a composition bias toward basic and acidic residues.

It belongs to the protein kinase superfamily. AGC Ser/Thr protein kinase family. PKC subfamily.

The enzyme catalyses L-seryl-[protein] + ATP = O-phospho-L-seryl-[protein] + ADP + H(+). It catalyses the reaction L-threonyl-[protein] + ATP = O-phospho-L-threonyl-[protein] + ADP + H(+). Its function is as follows. Protein kinase that is part of growth control pathway which is at least partially redundant with the cAMP pathway. In Schizosaccharomyces pombe (strain 972 / ATCC 24843) (Fission yeast), this protein is Serine/threonine-protein kinase sck2 (sck2).